The chain runs to 153 residues: Transcription antitermination protein NusB (153 aa).

The protein belongs to the NusB family.

In terms of biological role, involved in transcription antitermination. Required for transcription of ribosomal RNA (rRNA) genes. Binds specifically to the boxA antiterminator sequence of the ribosomal RNA (rrn) operons. The protein is Transcription antitermination protein NusB of Symbiobacterium thermophilum (strain DSM 24528 / JCM 14929 / IAM 14863 / T).